Here is a 116-residue protein sequence, read N- to C-terminus: T cell receptor alpha variable 38-1 (116 aa).

A signal peptide spans 1-21 (MTRVSLLWAVVVSTCLESGMA). The 95-residue stretch at 22–116 (QTVTQSQPEM…TAMYFCAFMK (95 aa)) folds into the Ig-like domain. An intrachain disulfide couples Cys43 to Cys112. N-linked (GlcNAc...) asparagine glycosylation occurs at Asn78.

In terms of assembly, alpha-beta TR is a heterodimer composed of an alpha and beta chain; disulfide-linked. The alpha-beta TR is associated with the transmembrane signaling CD3 coreceptor proteins to form the TR-CD3 (TcR or TCR). The assembly of alpha-beta TR heterodimers with CD3 occurs in the endoplasmic reticulum where a single alpha-beta TR heterodimer associates with one CD3D-CD3E heterodimer, one CD3G-CD3E heterodimer and one CD247 homodimer forming a stable octameric structure. CD3D-CD3E and CD3G-CD3E heterodimers preferentially associate with TR alpha and TR beta chains, respectively. The association of the CD247 homodimer is the last step of TcR assembly in the endoplasmic reticulum and is required for transport to the cell surface.

Its subcellular location is the cell membrane. In terms of biological role, v region of the variable domain of T cell receptor (TR) alpha chain that participates in the antigen recognition. Alpha-beta T cell receptors are antigen specific receptors which are essential to the immune response and are present on the cell surface of T lymphocytes. Recognize peptide-major histocompatibility (MH) (pMH) complexes that are displayed by antigen presenting cells (APC), a prerequisite for efficient T cell adaptive immunity against pathogens. Binding of alpha-beta TR to pMH complex initiates TR-CD3 clustering on the cell surface and intracellular activation of LCK that phosphorylates the ITAM motifs of CD3G, CD3D, CD3E and CD247 enabling the recruitment of ZAP70. In turn ZAP70 phosphorylates LAT, which recruits numerous signaling molecules to form the LAT signalosome. The LAT signalosome propagates signal branching to three major signaling pathways, the calcium, the mitogen-activated protein kinase (MAPK) kinase and the nuclear factor NF-kappa-B (NF-kB) pathways, leading to the mobilization of transcription factors that are critical for gene expression and essential for T cell growth and differentiation. The T cell repertoire is generated in the thymus, by V-(D)-J rearrangement. This repertoire is then shaped by intrathymic selection events to generate a peripheral T cell pool of self-MH restricted, non-autoaggressive T cells. Post-thymic interaction of alpha-beta TR with the pMH complexes shapes TR structural and functional avidity. This is T cell receptor alpha variable 38-1 from Homo sapiens (Human).